We begin with the raw amino-acid sequence, 188 residues long: Augmin complex subunit dgt4 (188 aa).

Positions 141 to 163 (QREFAQNQEALRSLRTAVDGLEN) form a coiled coil.

In terms of assembly, component of the augmin complex composed of dgt2, dgt3, dgt4, dgt5, dgt6, msd1, msd5 and wac. The complex interacts directly or indirectly with microtubules and is required for centrosome-independent generation of spindle microtubules.

The protein resides in the cytoplasm. Its subcellular location is the cytoskeleton. It is found in the spindle. Its function is as follows. As part of the augmin complex, plays a role in centrosome-independent generation of spindle microtubules. The complex is required for mitotic spindle assembly through its involvement in localizing gamma-tubulin to spindle microtubules. The sequence is that of Augmin complex subunit dgt4 from Drosophila melanogaster (Fruit fly).